Reading from the N-terminus, the 837-residue chain is Histone acetyltransferase KAT2A (837 aa).

Residues 1 to 99 (MAEPSQAPTP…RKAQVRGLPR (99 aa)) are disordered. Ala2 carries the post-translational modification N-acetylalanine. Positions 7-51 (APTPAPAAQPRPLQSPAPAPTPTPAPSPASAPIPTPTPAPAPAPA) are enriched in pro residues. Residues 58 to 74 (TGTGGPGVGSGGAGSGG) show a composition bias toward gly residues. The span at 75-87 (DPARPGLSQQQRA) shows a compositional bias: low complexity. The span at 88–99 (SQRKAQVRGLPR) shows a compositional bias: basic residues. Phosphoserine is present on Ser307. Residues 407 to 434 (FSPSMGGGSNSSLSLDSAGAEPMPGEKR) form a disordered region. A compositionally biased stretch (low complexity) spans 416–425 (NSSLSLDSAG). Residues 503 to 656 (VIGNSLTPKA…GATLMECELN (154 aa)) enclose the N-acetyltransferase domain. Lys549 is modified (N6-acetyllysine). Residue Glu575 is the Proton donor/acceptor of the active site. Acetyl-CoA is bound by residues 579–581 (CAV), 586–592 (QVKGYGT), and Tyr617. Residues 579–581 (CAV), 586–592 (QVKGYGT), and Tyr617 contribute to the succinyl-CoA site. The tract at residues 639 to 648 (LGYIKDYEGA) is loop 3. Lys728 is covalently cross-linked (Glycyl lysine isopeptide (Lys-Gly) (interchain with G-Cter in SUMO2)). The region spanning 728–832 (KDPDQLYTTL…KFFYFKLKEG (105 aa)) is the Bromo domain. Thr735 carries the post-translational modification Phosphothreonine. Glycyl lysine isopeptide (Lys-Gly) (interchain with G-Cter in SUMO2) cross-links involve residues Lys759 and Lys791.

It belongs to the acetyltransferase family. GCN5 subfamily. Homooligomer; may form a tetramer of homodimers. Interacts with EP300, CREBBP and ADA2. Component of the TFTC-HAT complex, at least composed of TAF5L, TAF6L, TAF3, TADA3L, SUPT3H/SPT3, TAF2/TAFII150, TAF4/TAFII135, TAF5/TAFII100, KAT2A/GCN5L2, TAF10 and TRRAP. Component of the STAGA transcription coactivator-HAT complex, at least composed of SUPT3H, KAT2A, SUPT7L, TAF5L, TAF6L, TADA3L, TAD1L, TAF10, TAF12, TRRAP and TAF9. The STAGA core complex is associated with a subcomplex required for histone deubiquitination composed of ATXN7L3, ENY2 and USP22. Component of the ADA2A-containing complex (ATAC), composed of KAT14, KAT2A, TADA2L, TADA3L, ZZ3, MBIP, WDR5, YEATS2, CCDC101 and DR1. In the complex, it probably interacts directly with KAT14, MBIP and WDR5. Interacts with PML. Interacts with CEBPB. Interacts with TACC1, TACC2 and TACC3. Interacts with RELA. Interacts with NFATC2. Interacts with TBX5. Interacts with PLK4. Associates with the 2-oxoglutarate dehydrogenase complex. Interacts with XPC; leading to KAT2A recruitment to promoters and subsequent acetylation of histones. Interacts with ERCC3/XPB; leading to KAT2A recruitment to promoters and subsequent acetylation of histones. Interacts with ISL1. Interactions of ISL1 with MLIP1 or KAT2A may be mutually exclusive. As to quaternary structure, (Microbial infection) Interacts with and acetylates HIV-1 Tat. Acetylated at Lys-549, inhibiting the protein acetyltransferase activity. Deacetylation at Lys-549 by SIRT6 promotes phosphorylation at Ser-307 and Thr-735 and subsequent activation of the protein acetyltransferase activity, leading to acetylation and inactivation of PPARGC1A. Expressed in all tissues tested.

It localises to the nucleus. Its subcellular location is the chromosome. The protein localises to the cytoplasm. The protein resides in the cytoskeleton. It is found in the microtubule organizing center. It localises to the centrosome. It carries out the reaction L-lysyl-[histone] + acetyl-CoA = N(6)-acetyl-L-lysyl-[histone] + CoA + H(+). It catalyses the reaction L-lysyl-[protein] + acetyl-CoA = N(6)-acetyl-L-lysyl-[protein] + CoA + H(+). The catalysed reaction is succinyl-CoA + L-lysyl-[protein] = N(6)-succinyl-L-lysyl-[protein] + CoA + H(+). The enzyme catalyses glutaryl-CoA + L-lysyl-[protein] = N(6)-glutaryl-L-lysyl-[protein] + CoA + H(+). Protein lysine acyltransferase that can act as a acetyltransferase, glutaryltransferase, succinyltransferase or malonyltransferase, depending on the context. Acts as a histone lysine succinyltransferase: catalyzes succinylation of histone H3 on 'Lys-79' (H3K79succ), with a maximum frequency around the transcription start sites of genes. Succinylation of histones gives a specific tag for epigenetic transcription activation. Association with the 2-oxoglutarate dehydrogenase complex, which provides succinyl-CoA, is required for histone succinylation. In different complexes, functions either as an acetyltransferase (HAT) or as a succinyltransferase: in the SAGA and ATAC complexes, acts as a histone acetyltransferase. Has significant histone acetyltransferase activity with core histones, but not with nucleosome core particles. Has a a strong preference for acetylation of H3 at 'Lys-9' (H3K9ac). Acetylation of histones gives a specific tag for epigenetic transcription activation. Recruited by the XPC complex at promoters, where it specifically mediates acetylation of histone variant H2A.Z.1/H2A.Z, thereby promoting expression of target genes. Involved in long-term memory consolidation and synaptic plasticity: acts by promoting expression of a hippocampal gene expression network linked to neuroactive receptor signaling. Acts as a positive regulator of T-cell activation: upon TCR stimulation, recruited to the IL2 promoter following interaction with NFATC2 and catalyzes acetylation of histone H3 at 'Lys-9' (H3K9ac), leading to promote IL2 expression. Required for growth and differentiation of craniofacial cartilage and bone by regulating acetylation of histone H3 at 'Lys-9' (H3K9ac). Regulates embryonic stem cell (ESC) pluripotency and differentiation. Also acetylates non-histone proteins, such as CEBPB, MRE11, PPARGC1A, PLK4 and TBX5. Involved in heart and limb development by mediating acetylation of TBX5, acetylation regulating nucleocytoplasmic shuttling of TBX5. Acts as a negative regulator of centrosome amplification by mediating acetylation of PLK4. Acts as a negative regulator of gluconeogenesis by mediating acetylation and subsequent inactivation of PPARGC1A. Also acts as a histone glutaryltransferase: catalyzes glutarylation of histone H4 on 'Lys-91' (H4K91glu), a mark that destabilizes nucleosomes by promoting dissociation of the H2A-H2B dimers from nucleosomes. Its function is as follows. (Microbial infection) In case of HIV-1 infection, it is recruited by the viral protein Tat. Regulates Tat's transactivating activity and may help inducing chromatin remodeling of proviral genes. The sequence is that of Histone acetyltransferase KAT2A from Homo sapiens (Human).